A 189-amino-acid polypeptide reads, in one-letter code: MSEIKMPEFLTVESALKDSGLAVTPAELHGLLVGMISGGLPLDDNAWKPLMYDYTNDGLGWPDSAIQIGSAVFQFTVAELTGSELALSMLIPNDKEGLMNRADGLSEWVNHFISGLGLVDLKMDKASEALKEALVDLEEIARLGIDEDDDIEEQESLFEQVLEHVHVCVLTIHLELGQRIHKDASKAVH.

The protein belongs to the UPF0149 family.

This Aliivibrio salmonicida (strain LFI1238) (Vibrio salmonicida (strain LFI1238)) protein is UPF0149 protein VSAL_I2539.